A 321-amino-acid polypeptide reads, in one-letter code: Trem-like transcript 2 protein (321 aa).

The first 18 residues, 1-18 (MAPAFLLLLLLWPQGCVS), serve as a signal peptide directing secretion. Over 19–268 (GPSADSVYTK…PSIRHQDVYS (250 aa)) the chain is Extracellular. The Ig-like V-type domain occupies 20 to 121 (PSADSVYTKV…ILYPLMGFQL (102 aa)). Cystine bridges form between cysteine 41-cysteine 105 and cysteine 56-cysteine 63. The N-linked (GlcNAc...) asparagine glycan is linked to asparagine 89. Polar residues-rich tracts occupy residues 189–220 (GYSFTATSTTSQGPRRTMGSQTVTASPSNARD) and 227–241 (SISTKSGDLSTRSPT). The tract at residues 189 to 241 (GYSFTATSTTSQGPRRTMGSQTVTASPSNARDSSAGPESISTKSGDLSTRSPT) is disordered. A helical membrane pass occupies residues 269-289 (TVLGVVLTLLVLMLIMVYGFW). Residues 290-321 (KKRHMASYSMCSDPSTRDPPGRPEPYVEVYLI) are Cytoplasmic-facing.

Interacts with CD276 and this interaction enhances T-cell activation. Detected in cultured B-cells, T-cell leukemia and monocyte leukemia. Expressed constitutively on CD8 T-cells and induced on CD4 T-cells after activation.

Its subcellular location is the cell membrane. Its function is as follows. Cell surface receptor that may play a role in the innate and adaptive immune response. Acts as a counter-receptor for CD276 and interaction with CD276 on T-cells enhances T-cell activation. The chain is Trem-like transcript 2 protein (TREML2) from Homo sapiens (Human).